The following is a 1320-amino-acid chain: Transcriptional activator MN1 (1320 aa).

An N-acetylmethionine modification is found at M1. Disordered regions lie at residues 1 to 26, 92 to 121, 147 to 219, 231 to 411, 423 to 442, 474 to 615, 629 to 819, 840 to 1150, and 1247 to 1273; these read MFGL…FNET, FGGQ…FGGP, PPFA…SLEP, LEYN…EYPI, SEPV…NQRL, NGSM…AGRL, SAWF…KDNL, GAPN…PDEI, and PWEK…SASQ. Positions 98-113 are enriched in basic residues; sequence HHGHPGSHHPHQHHPH. Low complexity-rich tracts occupy residues 202-214 and 291-309; these read SFHG…GSDS and QPPQ…QQQQ. Residues 338–366 show a composition bias toward pro residues; that stretch reads MQPPQQAPPPPQQQPPQQPPQQQPPPPPG. The segment covering 498–514 has biased composition (pro residues); that stretch reads FTPPVPDSFPSGPPLQH. Low complexity-rich tracts occupy residues 523–550 and 564–578; these read QQQQ…QQQQ and RNQQ…LAQL. 2 stretches are compositionally biased toward gly residues: residues 582-596 and 701-710; these read GDVG…GPVG and QFGGSLGGLG. The segment covering 759–768 has biased composition (low complexity); the sequence is SGPGVNSPPS. A compositionally biased stretch (gly residues) spans 769-784; sequence AGGGGGSSGGGGGGGA. Composition is skewed to low complexity over residues 798–809 and 895–905; these read SASKLGALSLGS and GTSSSGSKASG. Residues 914–930 show a composition bias toward polar residues; the sequence is DGTSLSPNYTLESTSGN. S950 and S954 each carry phosphoserine. Positions 973–984 are enriched in low complexity; the sequence is GVSPGQQQASGA. Position 1007 is a phosphoserine (S1007). The span at 1048–1066 shows a compositional bias: polar residues; sequence EVSTSYANEDEVSSSSDNP. S1081 carries the post-translational modification Phosphoserine. The span at 1118–1128 shows a compositional bias: gly residues; that stretch reads YGGGGGPGHPG.

As to quaternary structure, interacts with PBX1, PKNOX1, ZBTB24, E2F7, RING1. Widely expressed in fetal and adult tissues. Highest expression is observed in fetal brain and skeletal muscle, and adult skeletal muscle.

It is found in the nucleus. Functionally, transcriptional activator which specifically regulates expression of TBX22 in the posterior region of the developing palate. Required during later stages of palate development for growth and medial fusion of the palatal shelves. Promotes maturation and normal function of calvarial osteoblasts, including expression of the osteoclastogenic cytokine TNFSF11/RANKL. Necessary for normal development of the membranous bones of the skull. May play a role in tumor suppression. This Homo sapiens (Human) protein is Transcriptional activator MN1 (MN1).